Reading from the N-terminus, the 470-residue chain is E3 SUMO-protein ligase EGR2 (470 aa).

The span at 126–141 (PPASTTASSSVTSASP) shows a compositional bias: low complexity. 3 disordered regions span residues 126–153 (PPAS…GVCT), 159–178 (PELD…SGCT), and 184–211 (DPSA…YPSP). The residue at position 247 (lysine 247) is an N6-acetyllysine; by EP300. The segment at 275–344 (GPSAGVTGPG…RPYPCPAEGC (70 aa)) is disordered. Residues 281-291 (TGPGASGGGEG) are compositionally biased toward gly residues. 3 C2H2-type zinc fingers span residues 337-361 (YPCP…IRIH), 367-389 (FQCR…IRTH), and 395-417 (FACD…TKIH). The tract at residues 408–470 (DERKRHTKIH…ASCTSRTRTP (63 aa)) is disordered. The span at 412-422 (RHTKIHLRQKE) shows a compositional bias: basic residues. Over residues 426-439 (SAPSSSASAQSSAS) the composition is skewed to low complexity. Gly residues predominate over residues 440–450 (GPGGSQAGGSL).

The protein belongs to the EGR C2H2-type zinc-finger protein family. As to quaternary structure, interacts with HCFC1. Interacts with WWP2. Interacts with UBC9. Interacts with CITED1. Interacts (via phosphorylated form) with SFN. Ubiquitinated by WWP2 leading to proteasomal degradation. In terms of processing, acetylated at Lys-247. May be deacetylated by HDAC6, HDAC10 or SIRT1.

The protein localises to the nucleus. Its pathway is protein modification; protein sumoylation. Its function is as follows. Sequence-specific DNA-binding transcription factor. Plays a role in hindbrain segmentation by regulating the expression of a subset of homeobox containing genes and in Schwann cell myelination by regulating the expression of genes involved in the formation and maintenance of myelin. Binds to two EGR2-consensus sites EGR2A (5'-CTGTAGGAG-3') and EGR2B (5'-ATGTAGGTG-3') in the HOXB3 enhancer and promotes HOXB3 transcriptional activation. Binds to specific DNA sites located in the promoter region of HOXA4, HOXB2 and ERBB2. Regulates hindbrain segmentation by controlling the expression of Hox genes, such as HOXA4, HOXB3 and HOXB2, and thereby specifying odd and even rhombomeres. Promotes the expression of HOXB3 in the rhombomere r5 in the hindbrain. Regulates myelination in the peripheral nervous system after birth, possibly by regulating the expression of myelin proteins, such as MPZ, and by promoting the differentiation of Schwann cells. Involved in the development of the jaw openener musculature, probably by playing a role in its innervation through trigeminal motor neurons. May play a role in adipogenesis, possibly by regulating the expression of CEBPB. In terms of biological role, E3 SUMO-protein ligase helping SUMO1 conjugation to its coregulators NAB1 and NAB2, whose sumoylation down-regulates EGR2 transcriptional activity. In Rattus norvegicus (Rat), this protein is E3 SUMO-protein ligase EGR2 (Egr2).